Reading from the N-terminus, the 102-residue chain is CRISPR-associated endoribonuclease Cas2 (102 aa).

Asp-8 provides a ligand contact to Mg(2+).

This sequence belongs to the CRISPR-associated endoribonuclease Cas2 protein family. As to quaternary structure, homodimer, forms a heterotetramer with a Cas1 homodimer. Requires Mg(2+) as cofactor.

In terms of biological role, CRISPR (clustered regularly interspaced short palindromic repeat), is an adaptive immune system that provides protection against mobile genetic elements (viruses, transposable elements and conjugative plasmids). CRISPR clusters contain sequences complementary to antecedent mobile elements and target invading nucleic acids. CRISPR clusters are transcribed and processed into CRISPR RNA (crRNA). Functions as a ssRNA-specific endoribonuclease. Involved in the integration of spacer DNA into the CRISPR cassette. In Acidovorax ebreus (strain TPSY) (Diaphorobacter sp. (strain TPSY)), this protein is CRISPR-associated endoribonuclease Cas2.